The sequence spans 241 residues: Probable FKBP-type peptidyl-prolyl cis-trans isomerase (241 aa).

Positions 150 to 241 (TDTVKVHYTG…VLDVNPKSEK (92 aa)) constitute a PPIase FKBP-type domain.

It belongs to the FKBP-type PPIase family.

The catalysed reaction is [protein]-peptidylproline (omega=180) = [protein]-peptidylproline (omega=0). In terms of biological role, PPIases accelerate the folding of proteins. It catalyzes the cis-trans isomerization of proline imidic peptide bonds in oligopeptides. The protein is Probable FKBP-type peptidyl-prolyl cis-trans isomerase of Haemophilus influenzae (strain ATCC 51907 / DSM 11121 / KW20 / Rd).